The primary structure comprises 169 residues: NADH-quinone oxidoreductase subunit B (169 aa).

Residues C45, C46, C111, and C141 each coordinate [4Fe-4S] cluster.

This sequence belongs to the complex I 20 kDa subunit family. In terms of assembly, NDH-1 is composed of 14 different subunits. Subunits NuoB, C, D, E, F, and G constitute the peripheral sector of the complex. Requires [4Fe-4S] cluster as cofactor.

Its subcellular location is the cell membrane. It catalyses the reaction a quinone + NADH + 5 H(+)(in) = a quinol + NAD(+) + 4 H(+)(out). NDH-1 shuttles electrons from NADH, via FMN and iron-sulfur (Fe-S) centers, to quinones in the respiratory chain. The immediate electron acceptor for the enzyme in this species is believed to be a menaquinone. Couples the redox reaction to proton translocation (for every two electrons transferred, four hydrogen ions are translocated across the cytoplasmic membrane), and thus conserves the redox energy in a proton gradient. In Clostridium beijerinckii (strain ATCC 51743 / NCIMB 8052) (Clostridium acetobutylicum), this protein is NADH-quinone oxidoreductase subunit B.